A 272-amino-acid polypeptide reads, in one-letter code: L-aminoadipate-semialdehyde dehydrogenase-phosphopantetheinyl transferase (272 aa).

It belongs to the P-Pant transferase superfamily. AcpS family.

It carries out the reaction apo-[ACP] + CoA = holo-[ACP] + adenosine 3',5'-bisphosphate + H(+). Its function is as follows. Catalyzes the transfer of a 4'-phosphopantetheine moiety from coenzyme A to a serine residue of acceptor proteins, such as alpha-aminoadipate reductase. Necessary for alpha-aminoadipate reductase activity. This is L-aminoadipate-semialdehyde dehydrogenase-phosphopantetheinyl transferase from Saccharomyces cerevisiae (strain ATCC 204508 / S288c) (Baker's yeast).